Reading from the N-terminus, the 221-residue chain is Ubiquitin-conjugating enzyme E2 S (221 aa).

In terms of domain architecture, UBC core spans 11–157 (QVLRLVYKEV…AHLLTEIHAM (147 aa)). The active-site Glycyl thioester intermediate is Cys-95. The tract at residues 158–221 (GGTSGAPQEP…TDKKRALRRL (64 aa)) is disordered. The segment covering 193-206 (GTGTNNSNISNTNI) has biased composition (low complexity). Residues 208–221 (AKKKTDKKRALRRL) are compositionally biased toward basic residues.

Belongs to the ubiquitin-conjugating enzyme family.

It catalyses the reaction S-ubiquitinyl-[E1 ubiquitin-activating enzyme]-L-cysteine + [E2 ubiquitin-conjugating enzyme]-L-cysteine = [E1 ubiquitin-activating enzyme]-L-cysteine + S-ubiquitinyl-[E2 ubiquitin-conjugating enzyme]-L-cysteine.. It participates in protein modification; protein ubiquitination. Catalyzes the covalent attachment of ubiquitin to other proteins. Acts as an essential factor of the anaphase promoting complex/cyclosome (APC/C), a cell cycle-regulated ubiquitin ligase that controls progression through mitosis. Acts by specifically elongating 'Lys-11'-linked polyubiquitin chains initiated by the E2 enzyme ube2c/ubch10 on APC/C substrates, enhancing the degradation of APC/C substrates by the proteasome and promoting mitotic exit. The sequence is that of Ubiquitin-conjugating enzyme E2 S (ube2s) from Danio rerio (Zebrafish).